An 86-amino-acid polypeptide reads, in one-letter code: Small ribosomal subunit protein bS16 (86 aa).

This sequence belongs to the bacterial ribosomal protein bS16 family.

This Mycoplasmoides gallisepticum (strain R(low / passage 15 / clone 2)) (Mycoplasma gallisepticum) protein is Small ribosomal subunit protein bS16.